A 340-amino-acid chain; its full sequence is Phosphoribosylformylglycinamidine cyclo-ligase (340 aa).

The protein belongs to the AIR synthase family.

The protein resides in the cytoplasm. The catalysed reaction is 2-formamido-N(1)-(5-O-phospho-beta-D-ribosyl)acetamidine + ATP = 5-amino-1-(5-phospho-beta-D-ribosyl)imidazole + ADP + phosphate + H(+). The protein operates within purine metabolism; IMP biosynthesis via de novo pathway; 5-amino-1-(5-phospho-D-ribosyl)imidazole from N(2)-formyl-N(1)-(5-phospho-D-ribosyl)glycinamide: step 2/2. This Streptococcus mutans serotype c (strain ATCC 700610 / UA159) protein is Phosphoribosylformylglycinamidine cyclo-ligase.